Reading from the N-terminus, the 450-residue chain is Enolase (450 aa).

Gln173 contacts (2R)-2-phosphoglycerate. Residue Glu215 is the Proton donor of the active site. Mg(2+) contacts are provided by Asp254, Glu308, and Asp335. Positions 360, 389, 390, and 411 each coordinate (2R)-2-phosphoglycerate. Residue Lys360 is the Proton acceptor of the active site.

Belongs to the enolase family. Mg(2+) is required as a cofactor.

It localises to the cytoplasm. It is found in the secreted. The protein localises to the cell surface. The enzyme catalyses (2R)-2-phosphoglycerate = phosphoenolpyruvate + H2O. It functions in the pathway carbohydrate degradation; glycolysis; pyruvate from D-glyceraldehyde 3-phosphate: step 4/5. Its function is as follows. Catalyzes the reversible conversion of 2-phosphoglycerate (2-PG) into phosphoenolpyruvate (PEP). It is essential for the degradation of carbohydrates via glycolysis. This chain is Enolase, found in Malacoplasma penetrans (strain HF-2) (Mycoplasma penetrans).